Here is a 612-residue protein sequence, read N- to C-terminus: Phragmoplastin DRP1D (612 aa).

Met-1 bears the N-acetylmethionine mark. In terms of domain architecture, Dynamin-type G spans 32–301; it reads WEALPSVAVV…LESVIRSRIP (270 aa). Residues 42–49 form a G1 motif region; that stretch reads GGQSSGKS. GTP is bound at residue 45–50; it reads SSGKSS. The segment at 68–70 is G2 motif; sequence VTR. The G3 motif stretch occupies residues 143 to 146; sequence DLPG. Positions 212-215 are G4 motif; sequence TKLD. Residues 213 to 218 and 243 to 246 each bind GTP; these read KLDLMD and NRSQ. The segment at 242 to 245 is G5 motif; it reads VNRS. The GED domain occupies 520-612; it reads FRKIASNVAA…DEIDAAVWVR (93 aa).

Belongs to the TRAFAC class dynamin-like GTPase superfamily. Dynamin/Fzo/YdjA family. As to quaternary structure, forms homodimer and may homooligomerize and heterooligomerize to form the phragmoplastin complex. Binds to PHIP1.

Its subcellular location is the cytoplasm. It is found in the cytoskeleton. It carries out the reaction GTP + H2O = GDP + phosphate + H(+). In terms of biological role, putative microtubule-associated force-producing protein. Has a GTPase activity. This Arabidopsis thaliana (Mouse-ear cress) protein is Phragmoplastin DRP1D.